Reading from the N-terminus, the 482-residue chain is MKFIIKLFPEITIKSQSVRLRFIKILTGNIRNVLKHYDETLAVVRHWDNIEVRAKDENQRLTIRDALTRIPGIHHILEVEDVPFTDMHDIFEKALVQYRDQLEGKTFCVRVKRRGKHDFSSIDVERYVGGGLNQHIESARVKLTNPDVTVHLEVEDDRLLLIKGRYEGIGGFPIGTQEDVLSLISGGFDSGVSSYMLMRRGCRVHYCFFNLGGAAHEIGVRQVAHYLWNRFGSSHRVRFVAINFEPVVGEILEKIDDGQMGVILKRMMVRAASKVAERYGVQALVTGEALGQVSSQTLTNLRLIDNVSDTLILRPLISYDKEHIINLARQIGTEDFARTMPEYCGVISKSPTVKAVKSKIEAEEEKFDFSILDKVVEEANNVDIREIAQQTEQEVVEVETVNGFGPNDVILDIRSVDEQEDKPLKVEGIDVVSLPFYKLSTKFGDLDQNKTWLLWCERGVMSRLQALYLREQGFNNVKVYRP.

The THUMP domain occupies 61–165 (LTIRDALTRI…DDRLLLIKGR (105 aa)). ATP-binding positions include 183–184 (LI), Lys-265, Gly-287, and Gln-296. A disulfide bridge links Cys-344 with Cys-456. The Rhodanese domain maps to 404–482 (FGPNDVILDI…GFNNVKVYRP (79 aa)). Residue Cys-456 is the Cysteine persulfide intermediate of the active site.

It belongs to the ThiI family.

The protein resides in the cytoplasm. The enzyme catalyses [ThiI sulfur-carrier protein]-S-sulfanyl-L-cysteine + a uridine in tRNA + 2 reduced [2Fe-2S]-[ferredoxin] + ATP + H(+) = [ThiI sulfur-carrier protein]-L-cysteine + a 4-thiouridine in tRNA + 2 oxidized [2Fe-2S]-[ferredoxin] + AMP + diphosphate. It carries out the reaction [ThiS sulfur-carrier protein]-C-terminal Gly-Gly-AMP + S-sulfanyl-L-cysteinyl-[cysteine desulfurase] + AH2 = [ThiS sulfur-carrier protein]-C-terminal-Gly-aminoethanethioate + L-cysteinyl-[cysteine desulfurase] + A + AMP + 2 H(+). The protein operates within cofactor biosynthesis; thiamine diphosphate biosynthesis. Catalyzes the ATP-dependent transfer of a sulfur to tRNA to produce 4-thiouridine in position 8 of tRNAs, which functions as a near-UV photosensor. Also catalyzes the transfer of sulfur to the sulfur carrier protein ThiS, forming ThiS-thiocarboxylate. This is a step in the synthesis of thiazole, in the thiamine biosynthesis pathway. The sulfur is donated as persulfide by IscS. In Shigella flexneri, this protein is tRNA sulfurtransferase.